A 454-amino-acid polypeptide reads, in one-letter code: Lipase member H (454 aa).

A signal peptide spans 1 to 23; sequence MIYRKIIWGILYVTLMLFDTHRA. 3 N-linked (GlcNAc...) asparagine glycosylation sites follow: N73, N137, and N151. The active-site Nucleophile is the S161. D185 functions as the Charge relay system in the catalytic mechanism. A disulfide bridge connects residues C240 and C253. Catalysis depends on H255, which acts as the Charge relay system. N-linked (GlcNAc...) asparagine glycosylation is present at N267. Disulfide bonds link C277–C288 and C291–C299. An N-linked (GlcNAc...) asparagine glycan is attached at N358. The cysteines at positions 430 and 449 are disulfide-linked.

Belongs to the AB hydrolase superfamily. Lipase family.

The protein localises to the secreted. The protein resides in the cell membrane. It carries out the reaction 1-hexadecanoyl-2-(9Z-octadecenoyl)-sn-glycero-3-phosphate + H2O = 2-(9Z-octadecenoyl)-sn-glycero-3-phosphate + hexadecanoate + H(+). Its function is as follows. Hydrolyzes specifically phosphatidic acid (PA) to produce 2-acyl lysophosphatidic acid (LPA; a potent bioactive lipid mediator) and fatty acid. Does not hydrolyze other phospholipids, like phosphatidylserine (PS), phosphatidylcholine (PC) and phosphatidylethanolamine (PE) or triacylglycerol (TG). The polypeptide is Lipase member H (liph) (Danio rerio (Zebrafish)).